The primary structure comprises 237 residues: Cytosolic-abundant heat soluble protein 86272 (237 aa).

Residues Phe-96 to Arg-125 form a disordered region. Over residues Arg-111–Arg-125 the composition is skewed to basic and acidic residues. Residues Lys-115–Ala-193 are a coiled coil. CAHS motif regions lie at residues Tyr-124–Gln-142 and Gln-161–Glu-179. The span at Ala-204–Ser-215 shows a compositional bias: low complexity. The segment at Ala-204–Phe-237 is disordered. Basic and acidic residues predominate over residues Glu-216 to Phe-237.

The protein belongs to the Cytosolic-abundant heat soluble protein (CAHS) family.

Its subcellular location is the cytoplasm. CAHS proteins are cytosolic heat soluble proteins that seem to contribute to the anhydrobiosis in tardigrades, but their specific mechanisms are yet to be identified. It is possible that protection during anhydrobiosis might occur via the stabilization of vitrifying small molecules such as sugars, but not via the direct glass transition of CAHS proteins themselves. The protein is Cytosolic-abundant heat soluble protein 86272 of Hypsibius exemplaris (Freshwater tardigrade).